A 381-amino-acid polypeptide reads, in one-letter code: UDP-4-amino-4-deoxy-L-arabinose--oxoglutarate aminotransferase (381 aa).

Residue Lys-182 is modified to N6-(pyridoxal phosphate)lysine.

It belongs to the DegT/DnrJ/EryC1 family. ArnB subfamily. In terms of assembly, homodimer. Pyridoxal 5'-phosphate serves as cofactor.

It catalyses the reaction UDP-4-amino-4-deoxy-beta-L-arabinose + 2-oxoglutarate = UDP-beta-L-threo-pentopyranos-4-ulose + L-glutamate. It participates in nucleotide-sugar biosynthesis; UDP-4-deoxy-4-formamido-beta-L-arabinose biosynthesis; UDP-4-deoxy-4-formamido-beta-L-arabinose from UDP-alpha-D-glucuronate: step 2/3. It functions in the pathway bacterial outer membrane biogenesis; lipopolysaccharide biosynthesis. Catalyzes the conversion of UDP-4-keto-arabinose (UDP-Ara4O) to UDP-4-amino-4-deoxy-L-arabinose (UDP-L-Ara4N). The modified arabinose is attached to lipid A and is required for resistance to polymyxin and cationic antimicrobial peptides. This is UDP-4-amino-4-deoxy-L-arabinose--oxoglutarate aminotransferase from Edwardsiella ictaluri (strain 93-146).